A 294-amino-acid chain; its full sequence is MRVEIVAADSLGVRSIATFVEACGYSIGVDLGASIAPRRFSLPPHPRELRRLEQALDRARRRLEESNIAIITHYHYDHYLRDEPELYAGRLLLAKDINRSINRSQRFRGYRFLVKSGLVERGRVEYADSRVFRLEGGLTIEFSKPVWHGEEGTKLGKVLMVRITCEGVSIVFASDVQGPGNNEALEELLKWSKPRPLVLIISGPPLYLGGYRVGMSSVELGIRNLEVLAERLRPKRLVVDHHLVRDPRFPEVLERLRGRAAGAGVEVLTAAEYMGLRPEPLETMRRELWKGEEG.

Belongs to the UPF0282 family.

The protein is UPF0282 protein APE_0500.1 of Aeropyrum pernix (strain ATCC 700893 / DSM 11879 / JCM 9820 / NBRC 100138 / K1).